Consider the following 194-residue polypeptide: FMN-dependent NADH:quinone oxidoreductase (194 aa).

FMN-binding positions include Ser9, 15-17, and 85-88; these read SIS and MYNF.

The protein belongs to the azoreductase type 1 family. Homodimer. It depends on FMN as a cofactor.

The catalysed reaction is 2 a quinone + NADH + H(+) = 2 a 1,4-benzosemiquinone + NAD(+). The enzyme catalyses N,N-dimethyl-1,4-phenylenediamine + anthranilate + 2 NAD(+) = 2-(4-dimethylaminophenyl)diazenylbenzoate + 2 NADH + 2 H(+). In terms of biological role, quinone reductase that provides resistance to thiol-specific stress caused by electrophilic quinones. Functionally, also exhibits azoreductase activity. Catalyzes the reductive cleavage of the azo bond in aromatic azo compounds to the corresponding amines. The chain is FMN-dependent NADH:quinone oxidoreductase from Xanthomonas oryzae pv. oryzae (strain KACC10331 / KXO85).